Here is a 314-residue protein sequence, read N- to C-terminus: DNA-directed RNA polymerase subunit alpha (314 aa).

Positions 1 to 228 (MIEIEKPKIE…EHLNIFVGLT (228 aa)) are alpha N-terminal domain (alpha-NTD). The tract at residues 246–314 (EKVLEMTIEE…ELGLGLRKDD (69 aa)) is alpha C-terminal domain (alpha-CTD).

It belongs to the RNA polymerase alpha chain family. In terms of assembly, homodimer. The RNAP catalytic core consists of 2 alpha, 1 beta, 1 beta' and 1 omega subunit. When a sigma factor is associated with the core the holoenzyme is formed, which can initiate transcription.

It catalyses the reaction RNA(n) + a ribonucleoside 5'-triphosphate = RNA(n+1) + diphosphate. Its function is as follows. DNA-dependent RNA polymerase catalyzes the transcription of DNA into RNA using the four ribonucleoside triphosphates as substrates. This is DNA-directed RNA polymerase subunit alpha from Bacillus cytotoxicus (strain DSM 22905 / CIP 110041 / 391-98 / NVH 391-98).